Consider the following 164-residue polypeptide: Kunitz-type trypsin inhibitor BrTI (164 aa).

Belongs to the leguminous Kunitz-type inhibitor family.

Its function is as follows. Inhibitor of trypsin and human plasma kallikrein with a Ki of 2.9 nM and 14.0 nM, respectively. Does not inhibit chymotrypsin, porcine pancreatic elastas, human neutrophil elastase, coagulation factor Xa, human thrombin, porcine pancreatic kallikrein or plasmin. This is Kunitz-type trypsin inhibitor BrTI from Bauhinia rufa (Orchid tree).